We begin with the raw amino-acid sequence, 111 residues long: Universal stress protein B (111 aa).

The next 2 helical transmembrane spans lie at 1–21 (MIST…NMAR) and 90–110 (FILT…LILW).

Belongs to the universal stress protein B family.

It localises to the cell inner membrane. The sequence is that of Universal stress protein B from Yersinia enterocolitica serotype O:8 / biotype 1B (strain NCTC 13174 / 8081).